The following is a 302-amino-acid chain: Lipoyl synthase (302 aa).

The [4Fe-4S] cluster site is built by C44, C49, C55, C70, C74, C77, and S283. The Radical SAM core domain maps to 56 to 272 (WSKKHATVMI…AKVARSKGFL (217 aa)).

The protein belongs to the radical SAM superfamily. Lipoyl synthase family. [4Fe-4S] cluster serves as cofactor.

Its subcellular location is the cytoplasm. The catalysed reaction is [[Fe-S] cluster scaffold protein carrying a second [4Fe-4S](2+) cluster] + N(6)-octanoyl-L-lysyl-[protein] + 2 oxidized [2Fe-2S]-[ferredoxin] + 2 S-adenosyl-L-methionine + 4 H(+) = [[Fe-S] cluster scaffold protein] + N(6)-[(R)-dihydrolipoyl]-L-lysyl-[protein] + 4 Fe(3+) + 2 hydrogen sulfide + 2 5'-deoxyadenosine + 2 L-methionine + 2 reduced [2Fe-2S]-[ferredoxin]. It participates in protein modification; protein lipoylation via endogenous pathway; protein N(6)-(lipoyl)lysine from octanoyl-[acyl-carrier-protein]: step 2/2. Functionally, catalyzes the radical-mediated insertion of two sulfur atoms into the C-6 and C-8 positions of the octanoyl moiety bound to the lipoyl domains of lipoate-dependent enzymes, thereby converting the octanoylated domains into lipoylated derivatives. The polypeptide is Lipoyl synthase (Orientia tsutsugamushi (strain Boryong) (Rickettsia tsutsugamushi)).